The sequence spans 332 residues: Ribosomal RNA small subunit methyltransferase H (332 aa).

S-adenosyl-L-methionine contacts are provided by residues 36–38 (GGY), Asp-54, Phe-81, Asp-102, and Gln-109. The disordered stretch occupies residues 284–332 (VTAGQEEVSANPRARSAKLRAAERTAAPATADDGESPGWPSLANVMRGG).

Belongs to the methyltransferase superfamily. RsmH family.

It is found in the cytoplasm. The enzyme catalyses cytidine(1402) in 16S rRNA + S-adenosyl-L-methionine = N(4)-methylcytidine(1402) in 16S rRNA + S-adenosyl-L-homocysteine + H(+). Functionally, specifically methylates the N4 position of cytidine in position 1402 (C1402) of 16S rRNA. In Nitrobacter hamburgensis (strain DSM 10229 / NCIMB 13809 / X14), this protein is Ribosomal RNA small subunit methyltransferase H.